Here is a 115-residue protein sequence, read N- to C-terminus: Arsenic resistance transcriptional regulator ArsR2 (115 aa).

The HTH arsR-type domain maps to 1 to 90 (MITPPDVFKS…EMLQVTLQAN (90 aa)). Cys30 and Cys32 together coordinate arsenite. The H-T-H motif DNA-binding region spans 31-54 (VCELMCALNDSQPKISRHLAQLRS).

In terms of assembly, homodimer.

It is found in the cytoplasm. Functionally, binds arsenite and regulates the expression of arsenic efflux pumps. In vitro, also binds antimony and bismuth, but not arsenate. The polypeptide is Arsenic resistance transcriptional regulator ArsR2 (Pseudomonas putida (strain ATCC 47054 / DSM 6125 / CFBP 8728 / NCIMB 11950 / KT2440)).